A 298-amino-acid polypeptide reads, in one-letter code: Dioxygenase aneA (298 aa).

Fe cation contacts are provided by His-134, Asp-136, and His-213.

The protein belongs to the PhyH family. As to quaternary structure, homodimer. It depends on Fe cation as a cofactor.

It catalyses the reaction aculene D + 2-oxoglutarate + O2 = aculene C + succinate + CO2 + H2O. The enzyme catalyses aculene B + 2-oxoglutarate + O2 = aculene A + succinate + CO2 + H2O. Its pathway is secondary metabolite biosynthesis. Functionally, dioxygenase; part of the gene cluster that mediates the biosynthesis of aculenes, a unique type of norsesquiterpenes that contain a nordaucane skeleton linked to an L-proline moiety and are of mixed biosynthetic origin. The pathway begins with the synthesis of dauca-4,7-diene by the terpene cyclase aneC using farnesyl pyrophosphate (FPP) as substrate. The cytochrome P450 monooxygenase aneF then performs the initial oxidation at C-12 of dauca-4,7-diene to yield asperaculane D. Asperaculane D is substrate of the cytochrome P450 monooxygenase aneD for C-10 hydroxylation to yield asperaculane E. The cytochrome P450 monooxygenase aneG then converts asperaculane E into aculene D via C-2 oxidation. The monomodular nonribosomal peptide synthase aneB adenylates L-proline and the thiohydrolase aneE transfers this activated L-proline derivative to aculenes D and C to produce respectively aculenes B and A. The dioxygenase aneA converts aculene D into aculene C, and aculene B into aculene A by introducing the 5,6-alkene moiety. Asperculanes A, B, C and F, as well as 14-prolyl asperculane C, might be shunt products of the pathway. The polypeptide is Dioxygenase aneA (Aspergillus aculeatus (strain ATCC 16872 / CBS 172.66 / WB 5094)).